The sequence spans 1354 residues: Rho-associated protein kinase 1 (1354 aa).

Serine 2 is modified (N-acetylserine). Residues 76 to 338 form the Protein kinase domain; it reads YEVVKVIGRG…VEEIKRHLFF (263 aa). Residues 82–90 and lysine 105 contribute to the ATP site; that span reads IGRGAFGEV. Aspartate 198 (proton acceptor) is an active-site residue. Residues 341-409 enclose the AGC-kinase C-terminal domain; sequence DQWAWETLRD…YSNRRYLSSA (69 aa). An interaction with FHOD1 region spans residues 368–727; that stretch reads FDDLEEDKGE…KKLKEEREAR (360 aa). The stretch at 422-692 forms a coiled coil; the sequence is KSLQESLQKT…RLEQEVNEHK (271 aa). Residues 479–556 enclose the REM-1 domain; the sequence is STVSQIEKEK…LEEANDLLRT (78 aa). Position 647 is an N6-acetyllysine (lysine 647). Positions 707–946 are SHROOM3 binding; sequence EAKSVAMCEM…TVSRLEEANS (240 aa). In terms of domain architecture, RhoBD spans 949 to 1015; that stretch reads TKDIEILRRE…LAEIMNRKDF (67 aa). An RHOA binding region spans residues 998-1010; the sequence is LKTQAVNKLAEIM. The stretch at 1011–1102 forms a coiled coil; it reads NRKDFKIDRK…KLLDLSDSTS (92 aa). A phosphoserine mark is found at serine 1105 and serine 1108. The segment at 1115–1354 is auto-inhibitory; that stretch reads NLPESRIEGW…VVKNTSGKTS (240 aa). The PH domain occupies 1118–1317; the sequence is ESRIEGWLSV…WVTHLVKKIP (200 aa). The segment at 1228-1281 adopts a Phorbol-ester/DAG-type zinc-finger fold; that stretch reads GHEFIPTLYHFPANCDACAKPLWHVFKPPPALECRRCHVKCHRDHLDKKEDLIC. Residues 1320–1354 are disordered; the sequence is PPSGFVRASPRTLSTRSTANQSFRKVVKNTSGKTS. Position 1328 is a phosphoserine (serine 1328). The segment covering 1330–1354 has biased composition (polar residues); the sequence is RTLSTRSTANQSFRKVVKNTSGKTS.

The protein belongs to the protein kinase superfamily. AGC Ser/Thr protein kinase family. Homodimer. Interacts with RHOB, RHOC, MYLC2B and PTEN. Interacts with ITGB1BP1 (via N-terminus and PTB domain). Interacts with RHOA (activated by GTP), CHORDC1, DAPK3, GEM, JIP3, RHOE, PPP1R12A, PFN1, LIMK1, LIMK2 and TSG101. Interacts with FHOD1 in a Src-dependent manner. Interacts with SHROOM3. Mg(2+) serves as cofactor. In terms of processing, autophosphorylated on serine and threonine residues. Cleaved by caspase-3 during apoptosis. This leads to constitutive activation of the kinase and membrane blebbing. In terms of tissue distribution, detected in blood platelets.

Its subcellular location is the cytoplasm. It is found in the cytoskeleton. The protein localises to the microtubule organizing center. The protein resides in the centrosome. It localises to the centriole. Its subcellular location is the golgi apparatus membrane. It is found in the cell projection. The protein localises to the bleb. The protein resides in the cell membrane. It localises to the lamellipodium. Its subcellular location is the ruffle. The enzyme catalyses L-seryl-[protein] + ATP = O-phospho-L-seryl-[protein] + ADP + H(+). It catalyses the reaction L-threonyl-[protein] + ATP = O-phospho-L-threonyl-[protein] + ADP + H(+). Activated by RHOA binding. Inhibited by Y-27632. Functionally, protein kinase which is a key regulator of the actin cytoskeleton and cell polarity. Involved in regulation of smooth muscle contraction, actin cytoskeleton organization, stress fiber and focal adhesion formation, neurite retraction, cell adhesion and motility via phosphorylation of DAPK3, GFAP, LIMK1, LIMK2, MYL9/MLC2, TPPP, PFN1 and PPP1R12A. Phosphorylates FHOD1 and acts synergistically with it to promote SRC-dependent non-apoptotic plasma membrane blebbing. Phosphorylates JIP3 and regulates the recruitment of JNK to JIP3 upon UVB-induced stress. Acts as a suppressor of inflammatory cell migration by regulating PTEN phosphorylation and stability. Acts as a negative regulator of VEGF-induced angiogenic endothelial cell activation. Required for centrosome positioning and centrosome-dependent exit from mitosis. Plays a role in terminal erythroid differentiation. Inhibits podocyte motility via regulation of actin cytoskeletal dynamics and phosphorylation of CFL1. Promotes keratinocyte terminal differentiation. Involved in osteoblast compaction through the fibronectin fibrillogenesis cell-mediated matrix assembly process, essential for osteoblast mineralization. May regulate closure of the eyelids and ventral body wall by inducing the assembly of actomyosin bundles. In Homo sapiens (Human), this protein is Rho-associated protein kinase 1 (ROCK1).